The sequence spans 161 residues: Nucleotide-binding protein Daci_4781 (161 aa).

The protein belongs to the YajQ family.

Nucleotide-binding protein. The polypeptide is Nucleotide-binding protein Daci_4781 (Delftia acidovorans (strain DSM 14801 / SPH-1)).